The primary structure comprises 428 residues: Adenylosuccinate synthetase (428 aa).

Residues 12-18 (GDEGKGK) and 40-42 (GHT) each bind GTP. Residue D13 is the Proton acceptor of the active site. 2 residues coordinate Mg(2+): D13 and G40. IMP-binding positions include 13–16 (DEGK), 38–41 (NAGH), T129, R143, Q224, T239, and R303. H41 acts as the Proton donor in catalysis. 299–305 (VTTGRIR) contributes to the substrate binding site. GTP contacts are provided by residues R305, 331–333 (KVD), and 410–412 (AYG).

The protein belongs to the adenylosuccinate synthetase family. In terms of assembly, homodimer. Mg(2+) is required as a cofactor.

The protein resides in the cytoplasm. The catalysed reaction is IMP + L-aspartate + GTP = N(6)-(1,2-dicarboxyethyl)-AMP + GDP + phosphate + 2 H(+). The protein operates within purine metabolism; AMP biosynthesis via de novo pathway; AMP from IMP: step 1/2. Functionally, plays an important role in the de novo pathway of purine nucleotide biosynthesis. Catalyzes the first committed step in the biosynthesis of AMP from IMP. The polypeptide is Adenylosuccinate synthetase (Francisella philomiragia subsp. philomiragia (strain ATCC 25017 / CCUG 19701 / FSC 153 / O#319-036)).